A 166-amino-acid polypeptide reads, in one-letter code: MSGKIGLYTGSFDPVTNGHMDMIKRASHLFEHVYVGIFNNPNKQSFFTFELRAQMLSEAVCALPNVTVVSAEHGLAVDLARELSVTHLIRGLRNTADFDYEIGLEYFNHRLAPDIETIYLMATHDLQPVSSSRIRELIAFRAPITGLVPQAVINQVEKMNENNKKN.

Substrate is bound at residue serine 11. Residues 11–12 and histidine 19 each bind ATP; that span reads SF. Substrate-binding residues include lysine 43, alanine 76, and arginine 90. ATP-binding positions include 91-93, glutamate 101, and 126-132; these read GLR and LQPVSSS.

This sequence belongs to the bacterial CoaD family. In terms of assembly, homohexamer. Mg(2+) is required as a cofactor.

The protein localises to the cytoplasm. The enzyme catalyses (R)-4'-phosphopantetheine + ATP + H(+) = 3'-dephospho-CoA + diphosphate. It participates in cofactor biosynthesis; coenzyme A biosynthesis; CoA from (R)-pantothenate: step 4/5. Its function is as follows. Reversibly transfers an adenylyl group from ATP to 4'-phosphopantetheine, yielding dephospho-CoA (dPCoA) and pyrophosphate. The chain is Phosphopantetheine adenylyltransferase from Streptococcus equi subsp. equi (strain 4047).